The chain runs to 104 residues: Flagellar hook-basal body complex protein FliE (104 aa).

The protein belongs to the FliE family.

The protein resides in the bacterial flagellum basal body. The chain is Flagellar hook-basal body complex protein FliE from Pectobacterium carotovorum subsp. carotovorum (strain PC1).